A 284-amino-acid chain; its full sequence is L-ribulose-5-phosphate 3-epimerase UlaE (284 aa).

This sequence belongs to the L-ribulose-5-phosphate 3-epimerase family.

The enzyme catalyses L-ribulose 5-phosphate = L-xylulose 5-phosphate. Its pathway is cofactor degradation; L-ascorbate degradation; D-xylulose 5-phosphate from L-ascorbate: step 3/4. Catalyzes the isomerization of L-xylulose-5-phosphate to L-ribulose-5-phosphate. Is involved in the anaerobic L-ascorbate utilization. In Escherichia coli (strain K12 / MC4100 / BW2952), this protein is L-ribulose-5-phosphate 3-epimerase UlaE.